The primary structure comprises 1388 residues: DNA-directed RNA polymerase subunit beta' (1388 aa).

Zn(2+)-binding residues include C76, C78, C91, and C94. Mg(2+) is bound by residues D467, D469, and D471. Zn(2+)-binding residues include C810, C884, C891, and C894.

Belongs to the RNA polymerase beta' chain family. In terms of assembly, the RNAP catalytic core consists of 2 alpha, 1 beta, 1 beta' and 1 omega subunit. When a sigma factor is associated with the core the holoenzyme is formed, which can initiate transcription. Mg(2+) is required as a cofactor. It depends on Zn(2+) as a cofactor.

It catalyses the reaction RNA(n) + a ribonucleoside 5'-triphosphate = RNA(n+1) + diphosphate. In terms of biological role, DNA-dependent RNA polymerase catalyzes the transcription of DNA into RNA using the four ribonucleoside triphosphates as substrates. In Lawsonia intracellularis (strain PHE/MN1-00), this protein is DNA-directed RNA polymerase subunit beta'.